A 382-amino-acid chain; its full sequence is Chorismate synthase (382 aa).

Arg39 and Arg45 together coordinate NADP(+). FMN is bound by residues 127–129 (RAS), 245–246 (QA), Gly290, 305–309 (KPIPT), and Arg331.

Belongs to the chorismate synthase family. As to quaternary structure, homotetramer. Requires FMNH2 as cofactor.

It carries out the reaction 5-O-(1-carboxyvinyl)-3-phosphoshikimate = chorismate + phosphate. It participates in metabolic intermediate biosynthesis; chorismate biosynthesis; chorismate from D-erythrose 4-phosphate and phosphoenolpyruvate: step 7/7. Its function is as follows. Catalyzes the anti-1,4-elimination of the C-3 phosphate and the C-6 proR hydrogen from 5-enolpyruvylshikimate-3-phosphate (EPSP) to yield chorismate, which is the branch point compound that serves as the starting substrate for the three terminal pathways of aromatic amino acid biosynthesis. This reaction introduces a second double bond into the aromatic ring system. In Desulfitobacterium hafniense (strain Y51), this protein is Chorismate synthase.